Here is a 338-residue protein sequence, read N- to C-terminus: Holliday junction branch migration complex subunit RuvB (338 aa).

The tract at residues 1–181 (MEERILTQNF…FGVINRLDYY (181 aa)) is large ATPase domain (RuvB-L). ATP is bound by residues leucine 20, arginine 21, glycine 62, lysine 65, threonine 66, threonine 67, 128 to 130 (EDF), arginine 171, tyrosine 181, and arginine 218. Threonine 66 provides a ligand contact to Mg(2+). The interval 182–252 (SVEELKEIIK…TSKEALDVLG (71 aa)) is small ATPAse domain (RuvB-S). The interval 255 to 338 (EIGLEYIDRK…YIEQGRIEGV (84 aa)) is head domain (RuvB-H). Residues arginine 310 and arginine 315 each contribute to the DNA site.

Belongs to the RuvB family. Homohexamer. Forms an RuvA(8)-RuvB(12)-Holliday junction (HJ) complex. HJ DNA is sandwiched between 2 RuvA tetramers; dsDNA enters through RuvA and exits via RuvB. An RuvB hexamer assembles on each DNA strand where it exits the tetramer. Each RuvB hexamer is contacted by two RuvA subunits (via domain III) on 2 adjacent RuvB subunits; this complex drives branch migration. In the full resolvosome a probable DNA-RuvA(4)-RuvB(12)-RuvC(2) complex forms which resolves the HJ.

It is found in the cytoplasm. It carries out the reaction ATP + H2O = ADP + phosphate + H(+). The RuvA-RuvB-RuvC complex processes Holliday junction (HJ) DNA during genetic recombination and DNA repair, while the RuvA-RuvB complex plays an important role in the rescue of blocked DNA replication forks via replication fork reversal (RFR). RuvA specifically binds to HJ cruciform DNA, conferring on it an open structure. The RuvB hexamer acts as an ATP-dependent pump, pulling dsDNA into and through the RuvAB complex. RuvB forms 2 homohexamers on either side of HJ DNA bound by 1 or 2 RuvA tetramers; 4 subunits per hexamer contact DNA at a time. Coordinated motions by a converter formed by DNA-disengaged RuvB subunits stimulates ATP hydrolysis and nucleotide exchange. Immobilization of the converter enables RuvB to convert the ATP-contained energy into a lever motion, pulling 2 nucleotides of DNA out of the RuvA tetramer per ATP hydrolyzed, thus driving DNA branch migration. The RuvB motors rotate together with the DNA substrate, which together with the progressing nucleotide cycle form the mechanistic basis for DNA recombination by continuous HJ branch migration. Branch migration allows RuvC to scan DNA until it finds its consensus sequence, where it cleaves and resolves cruciform DNA. The polypeptide is Holliday junction branch migration complex subunit RuvB (Thermoanaerobacter pseudethanolicus (strain ATCC 33223 / 39E) (Clostridium thermohydrosulfuricum)).